A 290-amino-acid polypeptide reads, in one-letter code: MPNRGVVLLDGQALAYNIEKDLKNKIQIITAQTHKRPKLAVILVGKDPASITYVNMKIKACQRVGMDFDLKTLKENITEAELLSLIKDYNTDQNISGILVQLPLPRSIDTKMILEAIDPNKDVDGFHPLNIGKLCTQKESFLPATPMGVMRLLEHYHIEIKGKDVAIIGASNIIGKPLSMLMLNAGASVSVCHILTKDISFYTKNADIVCVGVGKPDLIKASMLKKGAVVVDIGINHLNDGRIVGDVDFINAQKIAGFITPVPKGVGPMTIVSLLENTLIAFEKQQRKGF.

NADP(+)-binding positions include 169–171 (GAS), Ile-194, and Ile-235.

The protein belongs to the tetrahydrofolate dehydrogenase/cyclohydrolase family. Homodimer.

It carries out the reaction (6R)-5,10-methylene-5,6,7,8-tetrahydrofolate + NADP(+) = (6R)-5,10-methenyltetrahydrofolate + NADPH. The catalysed reaction is (6R)-5,10-methenyltetrahydrofolate + H2O = (6R)-10-formyltetrahydrofolate + H(+). It functions in the pathway one-carbon metabolism; tetrahydrofolate interconversion. Catalyzes the oxidation of 5,10-methylenetetrahydrofolate to 5,10-methenyltetrahydrofolate and then the hydrolysis of 5,10-methenyltetrahydrofolate to 10-formyltetrahydrofolate. The polypeptide is Bifunctional protein FolD (Helicobacter pylori (strain J99 / ATCC 700824) (Campylobacter pylori J99)).